The sequence spans 309 residues: Probable lipid kinase YegS-like (309 aa).

Positions 1–134 (MAPSHWRLIL…VDLLRIDADH (134 aa)) constitute a DAGKc domain. ATP contacts are provided by residues Thr-39, 65 to 71 (GDGTLSE), and Thr-96. Mg(2+)-binding residues include Leu-219, Asp-222, and Leu-224. Glu-280 acts as the Proton acceptor in catalysis.

Belongs to the diacylglycerol/lipid kinase family. YegS lipid kinase subfamily. It depends on Mg(2+) as a cofactor. Ca(2+) serves as cofactor.

The protein localises to the cytoplasm. In terms of biological role, probably phosphorylates lipids; the in vivo substrate is unknown. The polypeptide is Probable lipid kinase YegS-like (Xanthomonas axonopodis pv. citri (strain 306)).